The primary structure comprises 467 residues: 55 kDa erythrocyte membrane protein (467 aa).

Positions 73–154 constitute a PDZ domain; sequence EVAFEKNQSE…VVTMKIIPRP (82 aa). Residues 160–230 enclose the SH3 domain; it reads PCEMYMRGQF…PSPELQEWRA (71 aa). The region spanning 283–452 is the Guanylate kinase-like domain; that stretch reads RKTLVLIGAP…SVKIVEEALE (170 aa).

The protein belongs to the MAGUK family. Post-translationally, extensively palmitoylated.

The protein localises to the membrane. Functionally, may play a role in the regulation of neutrophil polarization. The protein is 55 kDa erythrocyte membrane protein (mpp1) of Takifugu rubripes (Japanese pufferfish).